Consider the following 423-residue polypeptide: O-methyltransferase aoiF (423 aa).

Asp273 provides a ligand contact to S-adenosyl-L-methionine. The active-site Proton acceptor is the His324.

It belongs to the class I-like SAM-binding methyltransferase superfamily. Cation-independent O-methyltransferase family.

It participates in secondary metabolite biosynthesis. Its function is as follows. O-methyltransferase; part of the gene cluster that mediates the biosynthesis of a methylated derivative of known natural products orthosporin and diaporthin. Within the pathway, aoiF catalyzes the biotransformation of orthosporin to diaporthin but also of diaporthin to the final product, by performing a tandem methylation of the polyketide core. Orthosporin is produced by an oxidoreductase that has still to be identified and that catalyzes the stereospecific reduction of the carbonyl moiety of the hexaketide isocoumarin scaffold produced by the non-reducing polyketide synthase aoiG to generate the S-configured secondary alcohol at C-11. This is O-methyltransferase aoiF from Aspergillus oryzae (strain ATCC 42149 / RIB 40) (Yellow koji mold).